The chain runs to 509 residues: Ribonuclease Y (509 aa).

A helical membrane pass occupies residues 3-23 (IIFSSIFAGFILGFLIRVFLG). The KH domain maps to 197 to 257 (TVASVELPND…IRKELAKRTL (61 aa)). The region spanning 323–418 (VLSHSKETAI…VQIADAISAS (96 aa)) is the HD domain.

This sequence belongs to the RNase Y family.

The protein resides in the cell membrane. Functionally, endoribonuclease that initiates mRNA decay. In Borreliella afzelii (strain PKo) (Borrelia afzelii), this protein is Ribonuclease Y.